The following is a 144-amino-acid chain: Large ribosomal subunit protein uL13 (144 aa).

The protein belongs to the universal ribosomal protein uL13 family. As to quaternary structure, part of the 50S ribosomal subunit.

In terms of biological role, this protein is one of the early assembly proteins of the 50S ribosomal subunit, although it is not seen to bind rRNA by itself. It is important during the early stages of 50S assembly. The protein is Large ribosomal subunit protein uL13 of Natronomonas pharaonis (strain ATCC 35678 / DSM 2160 / CIP 103997 / JCM 8858 / NBRC 14720 / NCIMB 2260 / Gabara) (Halobacterium pharaonis).